The primary structure comprises 161 residues: Phosphopantetheine adenylyltransferase (161 aa).

Ser-11 lines the substrate pocket. Residues 11–12 and His-19 contribute to the ATP site; that span reads SF. Positions 43, 75, and 89 each coordinate substrate. ATP is bound by residues 90 to 92, Glu-100, and 125 to 131; these read GLR and YSYLSSS.

This sequence belongs to the bacterial CoaD family. Homohexamer. Requires Mg(2+) as cofactor.

It localises to the cytoplasm. The enzyme catalyses (R)-4'-phosphopantetheine + ATP + H(+) = 3'-dephospho-CoA + diphosphate. It participates in cofactor biosynthesis; coenzyme A biosynthesis; CoA from (R)-pantothenate: step 4/5. In terms of biological role, reversibly transfers an adenylyl group from ATP to 4'-phosphopantetheine, yielding dephospho-CoA (dPCoA) and pyrophosphate. This is Phosphopantetheine adenylyltransferase from Citrifermentans bemidjiense (strain ATCC BAA-1014 / DSM 16622 / JCM 12645 / Bem) (Geobacter bemidjiensis).